A 72-amino-acid chain; its full sequence is NAD(P)H-quinone oxidoreductase subunit O (72 aa).

This sequence belongs to the complex I NdhO subunit family. NDH-1 can be composed of about 15 different subunits; different subcomplexes with different compositions have been identified which probably have different functions.

Its subcellular location is the cellular thylakoid membrane. The catalysed reaction is a plastoquinone + NADH + (n+1) H(+)(in) = a plastoquinol + NAD(+) + n H(+)(out). It catalyses the reaction a plastoquinone + NADPH + (n+1) H(+)(in) = a plastoquinol + NADP(+) + n H(+)(out). Functionally, NDH-1 shuttles electrons from an unknown electron donor, via FMN and iron-sulfur (Fe-S) centers, to quinones in the respiratory and/or the photosynthetic chain. The immediate electron acceptor for the enzyme in this species is believed to be plastoquinone. Couples the redox reaction to proton translocation, and thus conserves the redox energy in a proton gradient. Cyanobacterial NDH-1 also plays a role in inorganic carbon-concentration. The sequence is that of NAD(P)H-quinone oxidoreductase subunit O from Trichodesmium erythraeum (strain IMS101).